The primary structure comprises 190 residues: Cathelicidin-3 (190 aa).

Residues 1–29 (METQMASPSLGRCSLWLLLLGLLLPSASA) form the signal peptide. Gln-30 is subject to Pyrrolidone carboxylic acid. Positions 30 to 130 (QALSYREAVL…DLNCNELQSV (101 aa)) are excised as a propeptide. Intrachain disulfides connect Cys-85–Cys-96 and Cys-107–Cys-124. The span at 133 to 151 (LRPRRPRLPRPRPRPRPRP) shows a compositional bias: basic residues. A disordered region spans residues 133–190 (LRPRRPRLPRPRPRPRPRPRSLPLPRPQPRRIPRPILLPWRPPRPIPRPQPQPIPRWL). Over residues 172-190 (WRPPRPIPRPQPQPIPRWL) the composition is skewed to pro residues.

Belongs to the cathelicidin family.

Its subcellular location is the secreted. Functionally, exerts, in vitro, a potent antimicrobial activity. Probably due to an impairment of the function of the respiratory chain and of energy-dependent activities in the inner membrane of susceptible microorganisms. In Ovis aries (Sheep), this protein is Cathelicidin-3 (CATHL3).